The sequence spans 145 residues: Ribonuclease H (145 aa).

An RNase H type-1 domain is found at 1-141; sequence MQEVIIYSDG…ADALANRGVA (141 aa). Mg(2+) contacts are provided by D9, E47, D69, and D133.

This sequence belongs to the RNase H family. Monomer. It depends on Mg(2+) as a cofactor.

It localises to the cytoplasm. It carries out the reaction Endonucleolytic cleavage to 5'-phosphomonoester.. Functionally, endonuclease that specifically degrades the RNA of RNA-DNA hybrids. This Cupriavidus pinatubonensis (strain JMP 134 / LMG 1197) (Cupriavidus necator (strain JMP 134)) protein is Ribonuclease H.